The primary structure comprises 131 residues: Large ribosomal subunit protein bL12 (131 aa).

It belongs to the bacterial ribosomal protein bL12 family. In terms of assembly, homodimer. Part of the ribosomal stalk of the 50S ribosomal subunit. Forms a multimeric L10(L12)X complex, where L10 forms an elongated spine to which 2 to 4 L12 dimers bind in a sequential fashion. Binds GTP-bound translation factors.

Forms part of the ribosomal stalk which helps the ribosome interact with GTP-bound translation factors. Is thus essential for accurate translation. The sequence is that of Large ribosomal subunit protein bL12 from Prochlorococcus marinus (strain MIT 9301).